Here is a 1133-residue protein sequence, read N- to C-terminus: Envelopment polyprotein (1133 aa).

A signal peptide spans 1–16; sequence MWSLLLLAALVGQGFA. The Lumenal portion of the chain corresponds to 17 to 484; it reads LKNVFDMRIQ…PGFHGWATAA (468 aa). Disulfide bonds link C61–C155, C107–C126, C131–C136, C173–C183, C208–C245, C232–C349, C374–C433, C378–C387, C403–C422, and C450–C473. N-linked (GlcNAc...) asparagine; by host glycosylation occurs at N132. N-linked (GlcNAc...) asparagine; by host glycans are attached at residues N233 and N345. N397 carries N-linked (GlcNAc...) asparagine; by host glycosylation. The helical transmembrane segment at 485–504 threads the bilayer; sequence LLITFCFGWVLIPACTLAIL. The Cytoplasmic segment spans residues 505–626; the sequence is LVLKFFANIL…NLFRYKSRCY (122 aa). The tract at residues 514 to 531 is binding to the ribonucleoprotein; it reads LHTSNQENRFKAILRKIK. CCHC-type zinc fingers lie at residues 543 to 563 and 568 to 589; these read CEICKYECETLKELKAHNLSC and CPYCFTHCEPTETAIQAHYKVC. 3 binding to the ribonucleoprotein regions span residues 586–603, 590–601, and 609–623; these read YKVCQATHRFREDLKKTV, QATHRFREDLKK, and GPGCYRTLNLFRYKS. Residues 609–632 enclose the ITAM domain; that stretch reads GPGCYRTLNLFRYKSRCYILTMWT. The short motif at 613-616 is the YxxL element; that stretch reads YRTL. The chain crosses the membrane as a helical span at residues 627-647; it reads ILTMWTLLLIIESILWAASAA. Residues 648-1105 are Lumenal-facing; it reads EIPLVPLWTD…VMGIINGNWV (458 aa). Cystine bridges form between C733–C768, C737–C775, C749–C883, C763–C894, C778–C902, C804–C813, C821–C830, and C861–C865. Residues 755–775 are fusion loop; that stretch reads YEYENSWACNPPDCPGVGTGC. A glycan (N-linked (GlcNAc...) asparagine; by host) is linked at N926. Cystine bridges form between C968-C998, C991-C1043, C1008-C1013, C1044-C1049, and C1083-C1087. Residues 1106–1125 traverse the membrane as a helical segment; sequence VLIVLCVLLLFSLILLSILC. Residues 1120-1133 form a binding to the ribonucleoprotein region; sequence LLSILCPVRKHKKS. Residues 1126–1133 lie on the Cytoplasmic side of the membrane; the sequence is PVRKHKKS.

This sequence belongs to the hantavirus envelope glycoprotein family. In terms of assembly, homodimer. Homotetramer; forms heterotetrameric Gn-Gc spikes in the pre-fusion conformation. Interacts (via C-terminus) with the nucleoprotein. Interacts with host TUFM; this interaction contributes to the virus-induced degradation of mitochondria by autophagy, which leads to degradation of host MAVS and inhibition of type I interferon (IFN) responses. Interacts with host MAP1LC3B; this interaction contributes to the virus-induced degradation of mitochondria by autophagy, which leads to degradation of host MAVS and inhibition of type I interferon (IFN) responses. Homodimer. Homotetramer; forms heterotetrameric Gn-Gc spikes in the pre-fusion conformation. Homotrimer; forms homotrimer in the post-fusion conformation at acidic pH. Interacts (via C-terminus) with the nucleoprotein. In terms of processing, envelope polyprotein precursor is quickly cleaved in vivo just after synthesis, presumably by host signal peptidase.

It is found in the virion membrane. The protein resides in the host cell surface. Its subcellular location is the host Golgi apparatus membrane. The protein localises to the host endoplasmic reticulum membrane. It localises to the host mitochondrion. Functionally, forms homotetramers with glycoprotein C at the surface of the virion. Attaches the virion to host cell receptors including integrin ITGAV/ITGB3. This attachment induces virion internalization predominantly through clathrin-dependent endocytosis. Mediates the assembly and budding of infectious virus particles through its interaction with the nucleocapsid protein and the viral genome. May dysregulate normal immune and endothelial cell responses through an ITAM motif. Translocates to mitochondria, binds to host TUFM and recruits MAP1LC3B. These interactions induce mitochondrial autophagy and therefore destruction of host MAVS leading to inhibition of type I interferon (IFN) responses. Concomitant breakdown of glycoprotein N is apparently prevented by the nucleoprotein that may inhibit Gn-stimulated autophagosome-lysosome fusion. Interacts with the viral genomic RNA. Its function is as follows. Forms homotetramers with glycoprotein N at the surface of the virion. Attaches the virion to host cell receptors including integrin ITGAV/ITGB3. This attachment induces virion internalization predominantly through clathrin-dependent endocytosis. Class II fusion protein that promotes fusion of viral membrane with host endosomal membrane after endocytosis of the virion. This Homo sapiens (Human) protein is Envelopment polyprotein (GP).